We begin with the raw amino-acid sequence, 88 residues long: Antitoxin HipB (88 aa).

An HTH cro/C1-type domain is found at 17–71 (MKLVRQQNGWTQSELAKKIGIKQATISNFENNPDNTTLTTFFKILQSLELSMTLC). A DNA-binding region (H-T-H motif) is located at residues 21 to 47 (RQQNGWTQSELAKKIGIKQATISNFEN).

In terms of assembly, homodimer. Binds operator DNA sites in the absence of HipA, inducing a 70 degree bend in consecutive operators and deforming DNA between the operators so that HipB dimers bind on opposite faces of the DNA. Forms a HipA(2)HipB(2) heterotetramer which can interact with a single operator site on DNA, inducing a 70 degree bend. When 2 operators are present each HipB dimer contacts 1 HipA molecule, which are brought together by the DNA bend and dimerize, blocking the HipA active site and inactivating its toxic activity. HipA-HipB-induced bending also distorts the -35 and -10 boxes of the promoter and probably prevents sigma-factor binding, and additionally bound HipB and HipA block RNA polymerase access to the -35 box, thus repressing the operon. This complex also blocks the toxic activity of HipA. Mutations present in allele hipA7 (G22S and D291A) decrease the affinity of HipA for HipB. Degraded by Lon protease in vivo; half-life is 17 minutes in wild-type cells and over 200 minutes in a lon deletion strain. In vitro degradation by Lon is Mg(2+)-ATP-dependent.

Degraded by Lon protease; degradation is inhibited in a HipA-HipB complex and when bound to the operator consensus sequence dsDNA. Functionally, antitoxin component of a type II toxin-antitoxin (TA) system. Neutralizes the toxic effect of cognate toxin HipA. Also neutralizes the toxic effect of non-cognate toxin YjjJ. Binds to operator sites with the consensus sequence 5-'TATCCN(8)GGATA-3' to repress the hipBA operon promoter; binding of HipB(2) to DNA induces a 70 degree bend. This forces HipA dimerization, which blocks HipA's active site and thus its toxic action. May play a role in biofilm formation. This Escherichia coli (strain K12) protein is Antitoxin HipB (hipB).